Reading from the N-terminus, the 2070-residue chain is HEAT repeat-containing protein 5B (2070 aa).

HEAT repeat units follow at residues 848-885 (EVRKSALTLVMGALDNPNPILRCAAGEALGRMAQVVGE), 1062-1099 (VNLSSLVPSLCVHLCSSHLLLRRAAVACLRQLAQREAA), and 1290-1327 (LHLSDLIRMAFMAATDHSNQLRMAGLQALEDIIKKFAS). At Ser1737 the chain carries Phosphoserine.

The protein belongs to the HEATR5 family. As to quaternary structure, self-associates. Component of the aftiphilin/p200/gamma-synergin complex, at least composed of AFTPH/aftiphilin, HEATR5B/p200a and SYNRG/gamma-synergin, which plays a role in the AP1G1/AP-1-mediated protein trafficking from early to recycling endosomes and between the trans-Golgi network (TGN) and endosomes. Within the complex interacts with AFTPH/aftiphilin and SYNRG/gamma-synergin; the interactions are direct. Interacts with GGA1.

The protein resides in the cytoplasm. It localises to the perinuclear region. It is found in the cytoplasmic vesicle. Its subcellular location is the clathrin-coated vesicle. Its function is as follows. Component of clathrin-coated vesicles. Component of the aftiphilin/p200/gamma-synergin complex, which plays roles in AP1G1/AP-1-mediated protein trafficking including the trafficking of transferrin from early to recycling endosomes, and the membrane trafficking of furin and the lysosomal enzyme cathepsin D between the trans-Golgi network (TGN) and endosomes. The polypeptide is HEAT repeat-containing protein 5B (Heatr5b) (Mus musculus (Mouse)).